The following is a 340-amino-acid chain: Heat-inducible transcription repressor HrcA (340 aa).

The protein belongs to the HrcA family.

Its function is as follows. Negative regulator of class I heat shock genes (grpE-dnaK-dnaJ and groELS operons). Prevents heat-shock induction of these operons. In Burkholderia mallei (strain NCTC 10247), this protein is Heat-inducible transcription repressor HrcA.